We begin with the raw amino-acid sequence, 382 residues long: Sphingoid long-chain base transporter RSB1 (382 aa).

The Extracellular segment spans residues 1-34 (MSNATNNTLGSLLPQLEAAANSNSLYGGMVPNLR). Residues Asn-3 and Asn-6 are each glycosylated (N-linked (GlcNAc...) asparagine). A helical membrane pass occupies residues 35-55 (FNITMIVIWGILLTIHVVQLL). Residues 56–57 (MR) are Cytoplasmic-facing. A helical transmembrane segment spans residues 58 to 78 (QYWFSIAFICTGILEVLGFIG). The Extracellular portion of the chain corresponds to 79–90 (RTWSHSNVADMD). The helical transmembrane segment at 91-111 (AFLLNMICLTIAPVFTMGGIY) threads the bilayer. Residues 112–135 (YQLAKLIEVYGHRFSLLPSPMAYS) are Cytoplasmic-facing. The helical transmembrane segment at 136–156 (FIFICSDIVSLVVQAVGGGLC) threads the bilayer. The Extracellular portion of the chain corresponds to 157-171 (GVAVTDGTSTTTGNH). The helical transmembrane segment at 172-192 (VFIAGLAIQVASMAIFLMLWF) threads the bilayer. Residues 193–241 (HFLFRIYISVRWEHINSRPISLSLLKISQTEVDYLYREKFHFLRLEPKR) lie on the Cytoplasmic side of the membrane. Residues 242–262 (WVFHYFNLAMTVAVLTIFTRC) traverse the membrane as a helical segment. Over 263 to 281 (CYRLAELVVGWDGYLITHE) the chain is Extracellular. The helical transmembrane segment at 282–302 (WYFIILDALMMAIATVTLTIF) threads the bilayer. Topologically, residues 303-382 (HPGFAFKGRS…LFSSKKKAKL (80 aa)) are cytoplasmic.

It belongs to the lipid-translocating exporter (LTE) (TC 9.A.26.1) family.

The protein resides in the cell membrane. Catalyzes the ATP-dependent translocation of sphingoid long-chain bases (LCBs) from the cytoplasmic site toward the extracytoplasmic side of the membrane (flip-flop). Involved in the establishment of the functional lipid asymmetry of the plasma membrane. Regulates intracellular levels of LCBs, sphingolipid precursors that are growth inhibitory at increased levels. The sequence is that of Sphingoid long-chain base transporter RSB1 (RSB1) from Saccharomyces cerevisiae (strain RM11-1a) (Baker's yeast).